We begin with the raw amino-acid sequence, 65 residues long: KEDGYLVDKTGCKKSCYKLGENDYCNRECKWKHVGGSYGYCYGFGCYCEGLSDSTPTWPLPNKTC.

The LCN-type CS-alpha/beta domain occupies 2-65 (EDGYLVDKTG…PTWPLPNKTC (64 aa)). Disulfide bonds link cysteine 12/cysteine 65, cysteine 16/cysteine 41, cysteine 25/cysteine 46, and cysteine 29/cysteine 48.

In terms of tissue distribution, expressed by the venom gland.

It localises to the secreted. Beta toxins bind voltage-independently at site-4 of sodium channels (Nav) and shift the voltage of activation toward more negative potentials thereby affecting sodium channel activation and promoting spontaneous and repetitive firing. Not toxic to mice, chicks, crickets or woodlice (at 5 ug). In Centruroides ornatus (Scorpion), this protein is Toxin Co52.